The primary structure comprises 216 residues: Uracil-DNA glycosylase (216 aa).

Asp59 acts as the Proton acceptor in catalysis.

This sequence belongs to the uracil-DNA glycosylase (UDG) superfamily. UNG family.

It is found in the cytoplasm. It catalyses the reaction Hydrolyzes single-stranded DNA or mismatched double-stranded DNA and polynucleotides, releasing free uracil.. Excises uracil residues from the DNA which can arise as a result of misincorporation of dUMP residues by DNA polymerase or due to deamination of cytosine. The chain is Uracil-DNA glycosylase from Staphylococcus epidermidis (strain ATCC 12228 / FDA PCI 1200).